The primary structure comprises 191 residues: Protein GrpE (191 aa).

Residues 1-15 show a composition bias toward basic and acidic residues; the sequence is MGKEEKNNIEDKALD. Residues 1–35 are disordered; it reads MGKEEKNNIEDKALDNEQEMDQESTSKAVEELSIE.

Belongs to the GrpE family. In terms of assembly, homodimer.

The protein localises to the cytoplasm. Participates actively in the response to hyperosmotic and heat shock by preventing the aggregation of stress-denatured proteins, in association with DnaK and GrpE. It is the nucleotide exchange factor for DnaK and may function as a thermosensor. Unfolded proteins bind initially to DnaJ; upon interaction with the DnaJ-bound protein, DnaK hydrolyzes its bound ATP, resulting in the formation of a stable complex. GrpE releases ADP from DnaK; ATP binding to DnaK triggers the release of the substrate protein, thus completing the reaction cycle. Several rounds of ATP-dependent interactions between DnaJ, DnaK and GrpE are required for fully efficient folding. This chain is Protein GrpE, found in Francisella philomiragia subsp. philomiragia (strain ATCC 25017 / CCUG 19701 / FSC 153 / O#319-036).